A 429-amino-acid chain; its full sequence is Mannose-6-phosphate isomerase (429 aa).

S2 carries the post-translational modification N-acetylserine. Residue S107 is modified to Phosphoserine. Zn(2+) is bound by residues Q109, H111, E136, and H281. R300 is a catalytic residue.

The protein belongs to the mannose-6-phosphate isomerase type 1 family. Monomer. The cofactor is Zn(2+).

It localises to the cytoplasm. It carries out the reaction D-mannose 6-phosphate = D-fructose 6-phosphate. Its pathway is nucleotide-sugar biosynthesis; GDP-alpha-D-mannose biosynthesis; alpha-D-mannose 1-phosphate from D-fructose 6-phosphate: step 1/2. Can be inhibited by an excess of zinc. Involved in the synthesis of the GDP-mannose and dolichol-phosphate-mannose required for a number of critical mannosyl transfer reactions. This is Mannose-6-phosphate isomerase (PMI40) from Saccharomyces cerevisiae (strain ATCC 204508 / S288c) (Baker's yeast).